The sequence spans 317 residues: Homoserine O-acetyltransferase (317 aa).

C142 (acyl-thioester intermediate) is an active-site residue. 2 residues coordinate substrate: K163 and S192. H235 acts as the Proton acceptor in catalysis. E237 is an active-site residue. R249 contacts substrate.

This sequence belongs to the MetA family.

It is found in the cytoplasm. The catalysed reaction is L-homoserine + acetyl-CoA = O-acetyl-L-homoserine + CoA. It participates in amino-acid biosynthesis; L-methionine biosynthesis via de novo pathway; O-acetyl-L-homoserine from L-homoserine: step 1/1. In terms of biological role, transfers an acetyl group from acetyl-CoA to L-homoserine, forming acetyl-L-homoserine. The protein is Homoserine O-acetyltransferase of Rhizorhabdus wittichii (strain DSM 6014 / CCUG 31198 / JCM 15750 / NBRC 105917 / EY 4224 / RW1) (Sphingomonas wittichii).